The primary structure comprises 349 residues: Isopentenyl-diphosphate delta-isomerase (349 aa).

A substrate-binding site is contributed by 6–7 (RK). FMN-binding positions include 62–64 (AMT), Ser93, and Asn122. Position 152 (Gln152) interacts with substrate. A Mg(2+)-binding site is contributed by Glu153. Residues Lys184, Thr214, 258-259 (GG), and 280-281 (AG) contribute to the FMN site.

This sequence belongs to the IPP isomerase type 2 family. In terms of assembly, homooctamer. Dimer of tetramers. It depends on FMN as a cofactor. The cofactor is NADPH. Mg(2+) serves as cofactor.

The protein resides in the cytoplasm. The catalysed reaction is isopentenyl diphosphate = dimethylallyl diphosphate. Functionally, involved in the biosynthesis of isoprenoids. Catalyzes the 1,3-allylic rearrangement of the homoallylic substrate isopentenyl (IPP) to its allylic isomer, dimethylallyl diphosphate (DMAPP). In Bacillus cytotoxicus (strain DSM 22905 / CIP 110041 / 391-98 / NVH 391-98), this protein is Isopentenyl-diphosphate delta-isomerase.